A 397-amino-acid polypeptide reads, in one-letter code: Tryptophan synthase beta chain (397 aa).

Position 89 is an N6-(pyridoxal phosphate)lysine (Lys-89).

The protein belongs to the TrpB family. As to quaternary structure, tetramer of two alpha and two beta chains. Requires pyridoxal 5'-phosphate as cofactor.

It catalyses the reaction (1S,2R)-1-C-(indol-3-yl)glycerol 3-phosphate + L-serine = D-glyceraldehyde 3-phosphate + L-tryptophan + H2O. It participates in amino-acid biosynthesis; L-tryptophan biosynthesis; L-tryptophan from chorismate: step 5/5. Its function is as follows. The beta subunit is responsible for the synthesis of L-tryptophan from indole and L-serine. The polypeptide is Tryptophan synthase beta chain (Leptospira interrogans serogroup Icterohaemorrhagiae serovar copenhageni (strain Fiocruz L1-130)).